The chain runs to 217 residues: MKFFVDTADTADIAEMAATGLLDGVTTNPSLIAKSGKQFVDVIAEICKIVPGPVSAEVVALDHATMMKEAEVLRKIADNVCIKVPLTIDGLKTCKALSDDGTMVNVTLCFSANQALLAGKAGAAFISPFVGRHDDVGLDGMGLIADIRQIYDNYDFGTEILVASVRHPIHILESAKIGADVMTAPPAVIRALFNHPLTDKGIQGFMADWAKTGQSIL.

The active-site Schiff-base intermediate with substrate is the Lys-83.

The protein belongs to the transaldolase family. Type 3B subfamily.

It localises to the cytoplasm. The enzyme catalyses D-sedoheptulose 7-phosphate + D-glyceraldehyde 3-phosphate = D-erythrose 4-phosphate + beta-D-fructose 6-phosphate. It functions in the pathway carbohydrate degradation; pentose phosphate pathway; D-glyceraldehyde 3-phosphate and beta-D-fructose 6-phosphate from D-ribose 5-phosphate and D-xylulose 5-phosphate (non-oxidative stage): step 2/3. In terms of biological role, transaldolase is important for the balance of metabolites in the pentose-phosphate pathway. This Rhizorhabdus wittichii (strain DSM 6014 / CCUG 31198 / JCM 15750 / NBRC 105917 / EY 4224 / RW1) (Sphingomonas wittichii) protein is Probable transaldolase.